The following is a 379-amino-acid chain: Alcohol dehydrogenase 2 (379 aa).

Residues Cys-47, Thr-49, His-69, Cys-99, Cys-102, Cys-105, Cys-113, and Cys-177 each contribute to the Zn(2+) site. The an alcohol site is built by Thr-49 and His-69. Thr-49 is a binding site for NAD(+). NAD(+)-binding positions include 202 to 207 (GLGAVG), Asp-226, Lys-231, Thr-272, Val-295, 295 to 297 (VGV), Phe-322, and Arg-372.

It belongs to the zinc-containing alcohol dehydrogenase family. In terms of assembly, homodimer. It depends on Zn(2+) as a cofactor.

The protein localises to the cytoplasm. It carries out the reaction a primary alcohol + NAD(+) = an aldehyde + NADH + H(+). The enzyme catalyses a secondary alcohol + NAD(+) = a ketone + NADH + H(+). The protein is Alcohol dehydrogenase 2 (ADH2) of Oryza sativa subsp. indica (Rice).